A 502-amino-acid polypeptide reads, in one-letter code: DnaJ homolog subfamily C member 3 homolog (502 aa).

A signal peptide spans 1-25 (MIVNKKYFLLICIIILISINCLVLA). 8 TPR repeats span residues 29 to 62 (IENFLKEGDDLVSKGKYDLANENYSNAIDLIGSD), 69 to 102 (VSLLFKRAGIYHQKGKNILALSDLNRAIEANPDN), 103 to 136 (IHARLKRAKIQSSLGRFEEAMDEYKRVLKIRPDN), 184 to 217 (KEVRLMLCECFFQQGDHRKVLDETMTILKSEPSS), 218 to 251 (VAALYWRGKTFFSMGEKEIAMKFLKEGLKFDPDN), 264 to 297 (FEKSTANAQELFNQQKYQDALGQIEDALEIEPNS), 302 to 335 (TPLYLLKCKCLLKVKKGKESIEACNRALELDELN), and 336 to 369 (ADALYNRAEAYMYEEDYQKALNDYNKAREHKPND). Asparagine 51 carries N-linked (GlcNAc...) asparagine glycosylation. A disulfide bond links cysteine 309 and cysteine 325. A J domain is found at 390–457 (DYYKILGIQK…EKRKRYDMGE (68 aa)).

It is found in the secreted. It localises to the endoplasmic reticulum lumen. In terms of biological role, may be involved in the unfolded protein response (UPR) during ER stress. The protein is DnaJ homolog subfamily C member 3 homolog (dnajc3) of Dictyostelium discoideum (Social amoeba).